Reading from the N-terminus, the 370-residue chain is 4-hydroxy-3-methylbut-2-en-1-yl diphosphate synthase (flavodoxin) (370 aa).

Positions 268, 271, 303, and 310 each coordinate [4Fe-4S] cluster.

This sequence belongs to the IspG family. [4Fe-4S] cluster is required as a cofactor.

It carries out the reaction (2E)-4-hydroxy-3-methylbut-2-enyl diphosphate + oxidized [flavodoxin] + H2O + 2 H(+) = 2-C-methyl-D-erythritol 2,4-cyclic diphosphate + reduced [flavodoxin]. It participates in isoprenoid biosynthesis; isopentenyl diphosphate biosynthesis via DXP pathway; isopentenyl diphosphate from 1-deoxy-D-xylulose 5-phosphate: step 5/6. Its function is as follows. Converts 2C-methyl-D-erythritol 2,4-cyclodiphosphate (ME-2,4cPP) into 1-hydroxy-2-methyl-2-(E)-butenyl 4-diphosphate. This Bacillus cereus (strain G9842) protein is 4-hydroxy-3-methylbut-2-en-1-yl diphosphate synthase (flavodoxin).